A 530-amino-acid polypeptide reads, in one-letter code: Berberine bridge enzyme-like 22 (530 aa).

The N-terminal stretch at 1-22 is a signal peptide; the sequence is MRELFMYLFLLFLVLCVKSVYS. Residues cysteine 32 and cysteine 99 are joined by a disulfide bond. 6 N-linked (GlcNAc...) asparagine glycosylation sites follow: asparagine 39, asparagine 47, asparagine 68, asparagine 75, asparagine 141, and asparagine 486. The FAD-binding PCMH-type domain occupies 77–251; that stretch reads TSLKPILIVK…LSWKVKLARV (175 aa). Residues 114-176 constitute a cross-link (6-(S-cysteinyl)-8alpha-(pros-histidyl)-FAD (His-Cys)); it reads HDYEGLSYLS…KIHAFAAGIC (63 aa).

Belongs to the oxygen-dependent FAD-linked oxidoreductase family. Requires FAD as cofactor. Post-translationally, the FAD cofactor is bound via a bicovalent 6-S-cysteinyl, 8alpha-N1-histidyl FAD linkage. Accumulates in cell walls of etiolated hypocotyls.

The protein localises to the secreted. It localises to the cell wall. The polypeptide is Berberine bridge enzyme-like 22 (Arabidopsis thaliana (Mouse-ear cress)).